Consider the following 233-residue polypeptide: MIEHLAINTPYFGILLSLIPFIIATFLFKKTNGFFLFTPLFVSMVVGIAFLKLTGIDYANYKIGGDIINFFLEPATICFAIPLYKRRDVLKKYWKQILGGITLGTTAALVCIYLIAEAFQFSNGIIASMLPQGATTAIALPVSADIGGIKELTSLAVILNGVIIYALGSKLIKLFNITNPIARGLALGTSGHSLGVSSAQEFGETEASMASISLVIVGVIVVIVAPILATLLL.

Transmembrane regions (helical) follow at residues 7 to 27 (INTP…ATFL), 33 to 53 (GFFL…FLKL), 63 to 83 (IGGD…AIPL), 97 to 117 (ILGG…LIAE), 124 to 144 (GIIA…PVSA), 152 to 172 (LTSL…SKLI), and 212 to 232 (ISLV…ATLL).

It belongs to the CidB/LrgB family. LrgB subfamily.

The protein resides in the cell membrane. Functionally, inhibits the expression or activity of extracellular murein hydrolases by interacting, possibly with LrgA, with the holin-like proteins CidA and/or CidB. The LrgAB and CidAB proteins may affect the proton motive force of the membrane. May be involved in programmed cell death (PCD), possibly triggering PCD in response to antibiotics and environmental stresses. This chain is Antiholin-like protein LrgB, found in Staphylococcus saprophyticus subsp. saprophyticus (strain ATCC 15305 / DSM 20229 / NCIMB 8711 / NCTC 7292 / S-41).